The chain runs to 264 residues: Thiazole synthase (264 aa).

Lysine 101 functions as the Schiff-base intermediate with DXP in the catalytic mechanism. 1-deoxy-D-xylulose 5-phosphate contacts are provided by residues glycine 162, 188–189 (AG), and 210–211 (NT).

The protein belongs to the ThiG family. As to quaternary structure, homotetramer. Forms heterodimers with either ThiH or ThiS.

The protein localises to the cytoplasm. It catalyses the reaction [ThiS sulfur-carrier protein]-C-terminal-Gly-aminoethanethioate + 2-iminoacetate + 1-deoxy-D-xylulose 5-phosphate = [ThiS sulfur-carrier protein]-C-terminal Gly-Gly + 2-[(2R,5Z)-2-carboxy-4-methylthiazol-5(2H)-ylidene]ethyl phosphate + 2 H2O + H(+). Its pathway is cofactor biosynthesis; thiamine diphosphate biosynthesis. Catalyzes the rearrangement of 1-deoxy-D-xylulose 5-phosphate (DXP) to produce the thiazole phosphate moiety of thiamine. Sulfur is provided by the thiocarboxylate moiety of the carrier protein ThiS. In vitro, sulfur can be provided by H(2)S. The sequence is that of Thiazole synthase from Chromobacterium violaceum (strain ATCC 12472 / DSM 30191 / JCM 1249 / CCUG 213 / NBRC 12614 / NCIMB 9131 / NCTC 9757 / MK).